A 736-amino-acid chain; its full sequence is Catalase-peroxidase (736 aa).

Residues 1–21 form a disordered region; sequence MSNEQKCPFSGTHGARTTVGT. Positions 96–224 form a cross-link, tryptophyl-tyrosyl-methioninium (Trp-Tyr) (with M-250); the sequence is WHSAGTYRTG…LAAVQMGLIY (129 aa). The active-site Proton acceptor is H97. Positions 224-250 form a cross-link, tryptophyl-tyrosyl-methioninium (Tyr-Met) (with W-96); that stretch reads YVNPEGPDGNPDPVASGRDIRETFARM. H265 contacts heme b.

This sequence belongs to the peroxidase family. Peroxidase/catalase subfamily. In terms of assembly, homodimer or homotetramer. It depends on heme b as a cofactor. Post-translationally, formation of the three residue Trp-Tyr-Met cross-link is important for the catalase, but not the peroxidase activity of the enzyme.

It catalyses the reaction H2O2 + AH2 = A + 2 H2O. It carries out the reaction 2 H2O2 = O2 + 2 H2O. Functionally, bifunctional enzyme with both catalase and broad-spectrum peroxidase activity. The polypeptide is Catalase-peroxidase (Dechloromonas aromatica (strain RCB)).